Here is a 725-residue protein sequence, read N- to C-terminus: Endoglucanase G (725 aa).

Residues 1-35 form the signal peptide; sequence MLKTKRKLTKAIGVALSISILSSLVSFIPQTNTYA. The active-site Nucleophile is the Asp93. Catalysis depends on residues His408, Asp446, and Glu455. The region spanning 489–650 is the CBM3 domain; that stretch reads ITNDEVIIKA…GVKVFGNEPA (162 aa). In terms of domain architecture, Dockerin spans 658-724; the sequence is PEILYGDVNS…LLGTITQLPQ (67 aa).

It belongs to the glycosyl hydrolase 9 (cellulase E) family.

The enzyme catalyses Endohydrolysis of (1-&gt;4)-beta-D-glucosidic linkages in cellulose, lichenin and cereal beta-D-glucans.. It participates in glycan metabolism; cellulose degradation. The biological conversion of cellulose to glucose generally requires three types of hydrolytic enzymes: (1) Endoglucanases which cut internal beta-1,4-glucosidic bonds; (2) Exocellobiohydrolases that cut the disaccharide cellobiose from the non-reducing end of the cellulose polymer chain; (3) Beta-1,4-glucosidases which hydrolyze the cellobiose and other short cello-oligosaccharides to glucose. This chain is Endoglucanase G (celCCG), found in Ruminiclostridium cellulolyticum (strain ATCC 35319 / DSM 5812 / JCM 6584 / H10) (Clostridium cellulolyticum).